The chain runs to 237 residues: Placenta-expressed transcript 1 protein (237 aa).

Positions 1–27 (MLSLRSLLPHLGLFLCLALHLSPSLSA) are cleaved as a signal peptide. Residues Asn-30, Asn-67, Asn-103, and Asn-136 are each glycosylated (N-linked (GlcNAc...) asparagine). Positions 145–162 (KMEQVQPSASTPIPESSE) are enriched in polar residues. Residues 145 to 170 (KMEQVQPSASTPIPESSETSQTINTT) are disordered. Ser-218 is lipidated: GPI-anchor amidated serine. A propeptide spans 219-237 (PLAGALHILLVFLISKLLF) (removed in mature form).

N-glycosylated. Post-translationally, GPI-anchored. Present in hair follicle cells and sebaceous gland of skin, ciliated epithelial cells of trachea and bronchial tube, striated portion of submandibular gland, distal convoluted tubule cells of kidney, ciliated epithelial cells of oviduct, medulla of adrenal gland and anterior lobe of pituitary gland. Expressed in keratinocytes of the hair follicle at the trichilemmal zone corresponding to the terminally differentiated outermost suprabasal outer root sheath (ORS), including that of the sebaceous gland duct (SGD) and the directly adjacent upper distal end of the companion layer (CL). Expression is similar in all hair follicle growth stages. Also detected during both the early and late anagen phases above the bulge of stem cells. Expressed at the leading edge of the epidermal wound. Not expressed in the interfollicular epidermis (IFE), inner root sheath (IRS) and hair fiber. Highly expressed in placenta. Detected in mammary and prostate epithelia and in the pancreas (at protein level).

The protein resides in the apical cell membrane. In terms of biological role, modulates leading keratinocyte migration and cellular adhesion to matrix proteins during a wound-healing response and promotes wound repair. May play a role during trichilemmal differentiation of the hair follicle. In Mus musculus (Mouse), this protein is Placenta-expressed transcript 1 protein (Plet1).